The primary structure comprises 172 residues: uncharacterized protein (172 aa).

Disordered regions lie at residues 1–39 (MAKV…NSNN) and 90–112 (DLNG…GSIN). Residues 98 to 110 (NDSNNDNSPSRGS) show a composition bias toward low complexity.

This is an uncharacterized protein from Dictyostelium discoideum (Social amoeba).